A 340-amino-acid polypeptide reads, in one-letter code: Probable dual-specificity RNA methyltransferase RlmN (340 aa).

Glu91 serves as the catalytic Proton acceptor. Residues 97–326 form the Radical SAM core domain; it reads HSGRVTACIS…CEIRKEKGTD (230 aa). Cys104 and Cys331 form a disulfide bridge. [4Fe-4S] cluster-binding residues include Cys111, Cys115, and Cys118. S-adenosyl-L-methionine is bound by residues 158–159, Ser190, 213–215, and Asn289; these read GE and SLH. Catalysis depends on Cys331, which acts as the S-methylcysteine intermediate.

This sequence belongs to the radical SAM superfamily. RlmN family. The cofactor is [4Fe-4S] cluster.

The protein resides in the cytoplasm. The enzyme catalyses adenosine(2503) in 23S rRNA + 2 reduced [2Fe-2S]-[ferredoxin] + 2 S-adenosyl-L-methionine = 2-methyladenosine(2503) in 23S rRNA + 5'-deoxyadenosine + L-methionine + 2 oxidized [2Fe-2S]-[ferredoxin] + S-adenosyl-L-homocysteine. It carries out the reaction adenosine(37) in tRNA + 2 reduced [2Fe-2S]-[ferredoxin] + 2 S-adenosyl-L-methionine = 2-methyladenosine(37) in tRNA + 5'-deoxyadenosine + L-methionine + 2 oxidized [2Fe-2S]-[ferredoxin] + S-adenosyl-L-homocysteine. Its function is as follows. Specifically methylates position 2 of adenine 2503 in 23S rRNA and position 2 of adenine 37 in tRNAs. This chain is Probable dual-specificity RNA methyltransferase RlmN, found in Thermosipho melanesiensis (strain DSM 12029 / CIP 104789 / BI429).